The following is a 1230-amino-acid chain: Potassium channel subfamily T member 1 (1230 aa).

Positions Met-1–Leu-37 are disordered. The Cytoplasmic portion of the chain corresponds to Met-1–Ser-93. Residues Leu-94–Cys-126 form a helical membrane-spanning segment. The Extracellular segment spans residues Trp-127 to Arg-153. N-linked (GlcNAc...) asparagine glycosylation is found at Asn-133 and Asn-137. The helical transmembrane segment at Lys-154–Leu-178 threads the bilayer. Residues Ser-179–Ser-192 lie on the Cytoplasmic side of the membrane. Residues Phe-193–Phe-208 form a helical membrane-spanning segment. Over Trp-209–Leu-215 the chain is Extracellular. The chain crosses the membrane as a helical span at residues Phe-216 to Met-233. Residues Ile-234–Ser-246 are Cytoplasmic-facing. The helical transmembrane segment at Ala-247–Glu-274 threads the bilayer. Over Arg-275–Ser-281 the chain is Extracellular. Residues Leu-282–Thr-302 constitute an intramembrane region (pore-forming). K(+) is bound by residues Val-296 and Gly-297. The Extracellular portion of the chain corresponds to Pro-303–Lys-304. The helical transmembrane segment at Ile-305 to Gln-338 threads the bilayer. Residues Lys-339–Leu-1230 lie on the Cytoplasmic side of the membrane. Positions Glu-352–Val-488 constitute an RCK N-terminal 1 domain. Na(+)-binding residues include Leu-513, His-516, Ser-538, and Asn-540. The disordered stretch occupies residues Thr-660–Pro-689. 2 residues coordinate Zn(2+): Cys-758 and Cys-759. Residues Arg-761 and Lys-764 each coordinate K(+). Arg-761 and Lys-764 together coordinate Na(+). Zn(2+)-binding residues include Cys-766 and His-768. K(+) is bound by residues Asn-769, Tyr-771, Tyr-777, and Gly-778. Tyr-771 contacts Na(+). Phe-779 lines the Na(+) pocket. The 141-residue stretch at Asn-781–Leu-921 folds into the RCK N-terminal 2 domain. K(+) contacts are provided by Ser-787, Leu-818, Asp-820, Gly-842, and Asp-865. Disordered regions lie at residues Glu-1048–Leu-1078 and Ser-1204–Leu-1230. The span at Ala-1057 to Asp-1072 shows a compositional bias: gly residues. A compositionally biased stretch (low complexity) spans Ser-1204–Ser-1219.

This sequence belongs to the potassium channel family. Calcium-activated (TC 1.A.1.3) subfamily. KCa4.1/KCNT1 sub-subfamily. In terms of assembly, homotetramer; which constitutes the Na(+)-activated K(+) channel. Interacts with KCNT2; these heterodimer channels differ from the homomers in their unitary conductance, kinetic behavior, subcellular localization, and response to activation of protein kinase C. Interacts (via C-terminus) with FMR1; this interaction alters gating properties of KCNT1. Interacts with CRBN via its cytoplasmic C-terminus. Phosphorylated by protein kinase C. Phosphorylation of the C-terminal domain increases channel activity. As to expression, highest expression in liver, brain and spinal cord. Lowest expression in skeletal muscle.

The protein localises to the cell membrane. The enzyme catalyses K(+)(in) = K(+)(out). With respect to regulation, activated by high intracellular Na(+). In addition to activation by Na(+), is cooperatively activated by intracellular Cl(-) levels. Inhibited by Zn(2+). Activated upon stimulation of G-protein coupled receptors, such as CHRM1 and GRIA1. Its function is as follows. Sodium-activated K(+) channel. Acts as an important mediator of neuronal membrane excitability. Contributes to the delayed outward currents. Regulates neuronal bursting in sensory neurons. Contributes to synaptic development and plasticity. This chain is Potassium channel subfamily T member 1, found in Homo sapiens (Human).